The primary structure comprises 207 residues: Phosphoribosylglycinamide formyltransferase (207 aa).

13-15 contributes to the N(1)-(5-phospho-beta-D-ribosyl)glycinamide binding site; sequence GSN. Residues 100–103 and N120 each bind (6R)-10-formyltetrahydrofolate; that span reads MHIL. H122 (proton donor) is an active-site residue. D162 is a binding site for (6R)-10-formyltetrahydrofolate. Residue E191 participates in N(1)-(5-phospho-beta-D-ribosyl)glycinamide binding.

Belongs to the GART family.

It catalyses the reaction N(1)-(5-phospho-beta-D-ribosyl)glycinamide + (6R)-10-formyltetrahydrofolate = N(2)-formyl-N(1)-(5-phospho-beta-D-ribosyl)glycinamide + (6S)-5,6,7,8-tetrahydrofolate + H(+). It functions in the pathway purine metabolism; IMP biosynthesis via de novo pathway; N(2)-formyl-N(1)-(5-phospho-D-ribosyl)glycinamide from N(1)-(5-phospho-D-ribosyl)glycinamide (10-formyl THF route): step 1/1. In Schizosaccharomyces pombe (strain 972 / ATCC 24843) (Fission yeast), this protein is Phosphoribosylglycinamide formyltransferase (ade5).